The sequence spans 389 residues: Phospho-N-acetylmuramoyl-pentapeptide-transferase (389 aa).

10 helical membrane passes run 25 to 45 (RAVM…PWVI), 73 to 93 (TMGG…WGDL), 97 to 117 (FIWI…VDDY), 135 to 155 (FWQS…VSEA), 190 to 210 (ISYP…IVGA), 222 to 242 (GLVI…AYVM), 258 to 278 (GAGE…AFLW), 286 to 306 (VFMG…VAVI), 311 to 331 (IVLF…MLQV), and 366 to 386 (QVVV…LSTL).

This sequence belongs to the glycosyltransferase 4 family. MraY subfamily. Requires Mg(2+) as cofactor.

The protein localises to the cell inner membrane. The catalysed reaction is UDP-N-acetyl-alpha-D-muramoyl-L-alanyl-gamma-D-glutamyl-meso-2,6-diaminopimeloyl-D-alanyl-D-alanine + di-trans,octa-cis-undecaprenyl phosphate = di-trans,octa-cis-undecaprenyl diphospho-N-acetyl-alpha-D-muramoyl-L-alanyl-D-glutamyl-meso-2,6-diaminopimeloyl-D-alanyl-D-alanine + UMP. It functions in the pathway cell wall biogenesis; peptidoglycan biosynthesis. Its function is as follows. Catalyzes the initial step of the lipid cycle reactions in the biosynthesis of the cell wall peptidoglycan: transfers peptidoglycan precursor phospho-MurNAc-pentapeptide from UDP-MurNAc-pentapeptide onto the lipid carrier undecaprenyl phosphate, yielding undecaprenyl-pyrophosphoryl-MurNAc-pentapeptide, known as lipid I. The sequence is that of Phospho-N-acetylmuramoyl-pentapeptide-transferase from Burkholderia ambifaria (strain ATCC BAA-244 / DSM 16087 / CCUG 44356 / LMG 19182 / AMMD) (Burkholderia cepacia (strain AMMD)).